A 685-amino-acid chain; its full sequence is Threonine--tRNA ligase (685 aa).

The region spanning 1 to 65 (MSTPASAAPA…DTDVEVEPVA (65 aa)) is the TGS domain. A catalytic region spans residues 262–568 (DHRKLGSELD…LTEHYAGAFP (307 aa)). Residues Cys367, His418, and His545 each contribute to the Zn(2+) site.

Belongs to the class-II aminoacyl-tRNA synthetase family. In terms of assembly, homodimer. The cofactor is Zn(2+).

The protein localises to the cytoplasm. The catalysed reaction is tRNA(Thr) + L-threonine + ATP = L-threonyl-tRNA(Thr) + AMP + diphosphate + H(+). Its function is as follows. Catalyzes the attachment of threonine to tRNA(Thr) in a two-step reaction: L-threonine is first activated by ATP to form Thr-AMP and then transferred to the acceptor end of tRNA(Thr). Also edits incorrectly charged L-seryl-tRNA(Thr). This is Threonine--tRNA ligase from Rhodococcus jostii (strain RHA1).